A 272-amino-acid chain; its full sequence is Phosphoglycolate phosphatase (272 aa).

The active-site Nucleophile is D19. Positions 19, 21, and 182 each coordinate Mg(2+).

This sequence belongs to the HAD-like hydrolase superfamily. CbbY/CbbZ/Gph/YieH family. It depends on Mg(2+) as a cofactor.

The catalysed reaction is 2-phosphoglycolate + H2O = glycolate + phosphate. The protein operates within organic acid metabolism; glycolate biosynthesis; glycolate from 2-phosphoglycolate: step 1/1. Its function is as follows. Specifically catalyzes the dephosphorylation of 2-phosphoglycolate. Is involved in the dissimilation of the intracellular 2-phosphoglycolate formed during the DNA repair of 3'-phosphoglycolate ends, a major class of DNA lesions induced by oxidative stress. This chain is Phosphoglycolate phosphatase, found in Pseudomonas savastanoi pv. phaseolicola (strain 1448A / Race 6) (Pseudomonas syringae pv. phaseolicola (strain 1448A / Race 6)).